Here is a 409-residue protein sequence, read N- to C-terminus: Argininosuccinate synthase (409 aa).

ATP is bound by residues 10-18 (AYSGGLDTS) and A37. Y90 and S95 together coordinate L-citrulline. G120 serves as a coordination point for ATP. L-aspartate-binding residues include T122, N126, and D127. L-citrulline is bound at residue N126. Residues R130, S182, S191, E267, and Y279 each contribute to the L-citrulline site.

This sequence belongs to the argininosuccinate synthase family. Type 1 subfamily. In terms of assembly, homotetramer.

It localises to the cytoplasm. It carries out the reaction L-citrulline + L-aspartate + ATP = 2-(N(omega)-L-arginino)succinate + AMP + diphosphate + H(+). It participates in amino-acid biosynthesis; L-arginine biosynthesis; L-arginine from L-ornithine and carbamoyl phosphate: step 2/3. The sequence is that of Argininosuccinate synthase from Azoarcus sp. (strain BH72).